The sequence spans 187 residues: Ribosome-recycling factor (187 aa).

It belongs to the RRF family.

It localises to the cytoplasm. In terms of biological role, responsible for the release of ribosomes from messenger RNA at the termination of protein biosynthesis. May increase the efficiency of translation by recycling ribosomes from one round of translation to another. This is Ribosome-recycling factor from Xanthobacter autotrophicus (strain ATCC BAA-1158 / Py2).